A 213-amino-acid polypeptide reads, in one-letter code: Urease accessory protein UreE (213 aa).

Positions 170 to 213 (EHHGRSHSHSHSHSHDHDHDHDHDHDHDHQHGPSCSHGHGHGHR) are disordered. Basic and acidic residues predominate over residues 182–200 (HSHDHDHDHDHDHDHDHQH).

Belongs to the UreE family.

It is found in the cytoplasm. Its function is as follows. Involved in urease metallocenter assembly. Binds nickel. Probably functions as a nickel donor during metallocenter assembly. This chain is Urease accessory protein UreE, found in Burkholderia thailandensis (strain ATCC 700388 / DSM 13276 / CCUG 48851 / CIP 106301 / E264).